The primary structure comprises 159 residues: Large ribosomal subunit protein uL11 (159 aa).

It belongs to the universal ribosomal protein uL11 family. In terms of assembly, part of the ribosomal stalk of the 50S ribosomal subunit. Interacts with L10 and the large rRNA to form the base of the stalk. L10 forms an elongated spine to which L12 dimers bind in a sequential fashion forming a multimeric L10(L12)X complex.

Its function is as follows. Forms part of the ribosomal stalk which helps the ribosome interact with GTP-bound translation factors. This chain is Large ribosomal subunit protein uL11, found in Methanococcus vannielii (strain ATCC 35089 / DSM 1224 / JCM 13029 / OCM 148 / SB).